The sequence spans 275 residues: Cis-2,3-dihydrobiphenyl-2,3-diol dehydrogenase (275 aa).

9-33 contacts NAD(+); the sequence is LITGGASGLGRALVDRFVAEAKVAV. Serine 140 lines the substrate pocket. The active-site Proton acceptor is tyrosine 153.

Belongs to the short-chain dehydrogenases/reductases (SDR) family.

It carries out the reaction (2R,3S)-3-phenylcyclohexa-3,5-diene-1,2-diol + NAD(+) = biphenyl-2,3-diol + NADH + H(+). Its pathway is xenobiotic degradation; biphenyl degradation; 2-hydroxy-2,4-pentadienoate and benzoate from biphenyl: step 2/4. This is Cis-2,3-dihydrobiphenyl-2,3-diol dehydrogenase (bphB) from Metapseudomonas furukawaii (Pseudomonas furukawaii).